A 344-amino-acid polypeptide reads, in one-letter code: Protein RecA (344 aa).

ATP is bound at residue 66–73 (GPESSGKT).

Belongs to the RecA family.

The protein localises to the cytoplasm. Its function is as follows. Can catalyze the hydrolysis of ATP in the presence of single-stranded DNA, the ATP-dependent uptake of single-stranded DNA by duplex DNA, and the ATP-dependent hybridization of homologous single-stranded DNAs. It interacts with LexA causing its activation and leading to its autocatalytic cleavage. This is Protein RecA from Azoarcus sp. (strain BH72).